The following is a 301-amino-acid chain: Acetylglutamate kinase (301 aa).

Substrate is bound by residues 72–73 (GG), Arg94, and Asn199.

It belongs to the acetylglutamate kinase family. ArgB subfamily.

It is found in the cytoplasm. It carries out the reaction N-acetyl-L-glutamate + ATP = N-acetyl-L-glutamyl 5-phosphate + ADP. Its pathway is amino-acid biosynthesis; L-arginine biosynthesis; N(2)-acetyl-L-ornithine from L-glutamate: step 2/4. Functionally, catalyzes the ATP-dependent phosphorylation of N-acetyl-L-glutamate. This Bartonella tribocorum (strain CIP 105476 / IBS 506) protein is Acetylglutamate kinase.